A 310-amino-acid chain; its full sequence is Homoserine kinase (310 aa).

91–101 (PIGSGLGSSAC) is a binding site for ATP.

Belongs to the GHMP kinase family. Homoserine kinase subfamily.

Its subcellular location is the cytoplasm. It carries out the reaction L-homoserine + ATP = O-phospho-L-homoserine + ADP + H(+). It participates in amino-acid biosynthesis; L-threonine biosynthesis; L-threonine from L-aspartate: step 4/5. In terms of biological role, catalyzes the ATP-dependent phosphorylation of L-homoserine to L-homoserine phosphate. The protein is Homoserine kinase of Shigella sonnei (strain Ss046).